We begin with the raw amino-acid sequence, 229 residues long: Potassium/proton antiporter CemA (229 aa).

4 helical membrane passes run 7–27 (FTPLLYLASIVFLPWWISLSF), 114–134 (LICFVILSGYSILGNEELLIL), 154–174 (ILLLTDLCIGFHSPHGWELMI), and 189–209 (IISGLVSTFPVILDTIFKYWI).

It belongs to the CemA family.

Its subcellular location is the plastid. It localises to the chloroplast inner membrane. The enzyme catalyses K(+)(in) + H(+)(out) = K(+)(out) + H(+)(in). Functionally, contributes to K(+)/H(+) antiport activity by supporting proton efflux to control proton extrusion and homeostasis in chloroplasts in a light-dependent manner to modulate photosynthesis. Prevents excessive induction of non-photochemical quenching (NPQ) under continuous-light conditions. Indirectly promotes efficient inorganic carbon uptake into chloroplasts. The sequence is that of Potassium/proton antiporter CemA from Gossypium hirsutum (Upland cotton).